A 623-amino-acid chain; its full sequence is Protein EDS1L (623 aa).

Alanine 2 is subject to N-acetylalanine. Serine 123 serves as the catalytic Nucleophile. Catalysis depends on charge relay system residues aspartate 187 and histidine 317.

Homodimer. Interacts with RPS4, RPS6, SNC1, SRFR1, AvrRps4 and HopA1. Interacts with PAD4 (via N-terminus). Interacts with SAG101. EDS1-SAG101 and EDS1-PAD4 form separate complexes in pathogen-unchallenged cells.

It is found in the nucleus. Its subcellular location is the cytoplasm. It localises to the microsome. In terms of biological role, positive regulator of basal resistance and of effector-triggered immunity specifically mediated by TIR-NB-LRR resistance proteins. Disruption by bacterial effector of EDS1-TIR-NB-LRR resistance protein interactions constitutes the first step in resistance activation. Triggers early plant defenses and hypersensitive response independently of PAD4, and then recruits PAD4 to potentiate plant defenses through the accumulation of salicylic acid. Nuclear localization is essential for basal and TIR-NB-LRR-conditioned immunity and for reprogramming defense gene expression, while cytoplasmic EDS1 is required to induce a complete immune response. Heterodimerization with PAD4 or SGA101 is necessary for TNL-mediated effector-triggered immunity. Contributes to nonhost resistance against E.amylovora. Has no direct lipase activity. This chain is Protein EDS1L, found in Arabidopsis thaliana (Mouse-ear cress).